Here is a 251-residue protein sequence, read N- to C-terminus: Seminal metalloprotease 1 (251 aa).

Positions Met1–Ser18 are cleaved as a signal peptide. The Peptidase M12A domain occupies Asn44–Pro248. Residues Asn55 and Asn120 are each glycosylated (N-linked (GlcNAc...) asparagine). Intrachain disulfides connect Cys87–Cys247 and Cys111–Cys136. Zn(2+) is bound at residue His144. Glu145 is an active-site residue. Zn(2+) contacts are provided by His148 and His154. The N-linked (GlcNAc...) asparagine glycan is linked to Asn185.

Zn(2+) serves as cofactor. Undergoes cleavage in the male during mating with a cleaved product detected in the ejaculatory duct and/or bulb of males by 8-10 minutes after the start of mating. Further cleavage occurs in the mated female. May undergo cleavage in a two-step process where it is first cleaved by Sems, making it susceptible to activational cleavage which may be carried out by another protease or by autocleavage. In terms of tissue distribution, produced in the male accessory glands and secreted into seminal fluid. In mated females, confined to the reproductive tract and also detected in eggs laid by mated females (at protein level).

The protein localises to the secreted. In terms of biological role, seminal fluid metalloprotease which is transferred to females during mating and is required for processing of two other seminal fluid proteins Acp26Aa and Acp36DE in mated females. The chain is Seminal metalloprotease 1 from Drosophila melanogaster (Fruit fly).